The sequence spans 39 residues: Omega-theraphotoxin-Ba1a (39 aa).

3 cysteine pairs are disulfide-bonded: cysteine 4-cysteine 25, cysteine 8-cysteine 31, and cysteine 17-cysteine 36.

It belongs to the neurotoxin 12 (Hwtx-2) family. 06 (TXP1) subfamily. As to expression, expressed by the venom gland.

Its subcellular location is the secreted. Its function is as follows. Inhibits voltage-gated calcium channels (Cav) in rat cerebellar granule cells. Has insecticidal activity to crickets (Acheta domesticus). Is not toxic to mice. The protein is Omega-theraphotoxin-Ba1a of Brachypelma albiceps (Mexican golden redrump tarantula).